The sequence spans 653 residues: tRNA-guanine(15) transglycosylase (653 aa).

D91 (nucleophile) is an active-site residue. The substrate site is built by D126 and A193. Zn(2+)-binding residues include C276, C278, and C281. The 76-residue stretch at 578–653 (AWRVAVNEES…QAVKTRKGGF (76 aa)) folds into the PUA domain.

This sequence belongs to the archaeosine tRNA-ribosyltransferase family. It depends on Zn(2+) as a cofactor.

It carries out the reaction guanosine(15) in tRNA + 7-cyano-7-deazaguanine = 7-cyano-7-carbaguanosine(15) in tRNA + guanine. It functions in the pathway tRNA modification; archaeosine-tRNA biosynthesis. Exchanges the guanine residue with 7-cyano-7-deazaguanine (preQ0) at position 15 in the dihydrouridine loop (D-loop) of archaeal tRNAs. The polypeptide is tRNA-guanine(15) transglycosylase (Methanothermobacter thermautotrophicus (strain ATCC 29096 / DSM 1053 / JCM 10044 / NBRC 100330 / Delta H) (Methanobacterium thermoautotrophicum)).